A 160-amino-acid chain; its full sequence is Bursicon (160 aa).

The first 20 residues, 1–20 (MSVLNTFLVIVALILCYVND), serve as a signal peptide directing secretion. The 94-residue stretch at 38–131 (CQECQMTAVI…PLQCMCRPCG (94 aa)) folds into the CTCK domain. 5 disulfide bridges follow: Cys41–Cys90, Cys55–Cys104, Cys65–Cys125, Cys69–Cys127, and Cys87–Cys130.

In terms of assembly, heterodimer of burs and pburs.

It localises to the secreted. In terms of biological role, final heterodimeric neurohormone released at the end of the molting cycle, involved in the sclerotization (tanning) of the insect cuticle, melanization and wing spreading. This is Bursicon from Bombyx mori (Silk moth).